We begin with the raw amino-acid sequence, 740 residues long: Anaphase-promoting complex subunit 5 (740 aa).

Serine 180 carries the phosphoserine modification. 13 TPR repeats span residues 194–234, 235–285, 286–322, 323–363, 364–403, 404–451, 452–485, 486–525, 526–565, 566–605, 606–645, 646–681, and 682–721; these read QKQA…FNPD, FAEA…GRSL, RYAALNLAALHCRFGHYQQAELALQEAIRIAQESNDH, VCLQ…YLAS, LGIQSLVQQRAFAGKTANKLMDALKDSDLLHWKHSLSELI, DISI…TESF, AVALCHLAELHAEQGCFAAAGEVLKHLKDRFPPN, SQHAQLWMLCDQKIQFDRAMNDGKFHLADSLVTGITALNG, IEGVYRKAVVLQAQNQMTEAHKLLQKLLTYCQKLKNTEMV, ISVLLSVAELYWRSSSPTIAMPVLLEALALSKEYRLQYLA, SETVLNLAYAQLILGIPEQALTLLHMAIEPILADGAVLDK, GRAMFLVSKCQVASAASYDPVKKAEALEAAIQNLSE, and AKNYFAQVDCRERIRDVAYFQARLYHALGKTQERNHCAMI. Threonine 217 carries the post-translational modification Phosphothreonine.

This sequence belongs to the APC5 family. The mammalian APC/C is composed at least of 14 distinct subunits ANAPC1, ANAPC2, CDC27/APC3, ANAPC4, ANAPC5, CDC16/APC6, ANAPC7, CDC23/APC8, ANAPC10, ANAPC11, CDC26/APC12, ANAPC13, ANAPC15 and ANAPC16 that assemble into a complex of at least 19 chains with a combined molecular mass of around 1.2 MDa; APC/C interacts with FZR1 and FBXO5.

It localises to the nucleus. The protein localises to the cytoplasm. The protein resides in the cytoskeleton. Its subcellular location is the spindle. It participates in protein modification; protein ubiquitination. Its function is as follows. Component of the anaphase promoting complex/cyclosome (APC/C), a cell cycle-regulated E3 ubiquitin ligase that controls progression through mitosis and the G1 phase of the cell cycle. The APC/C complex acts by mediating ubiquitination and subsequent degradation of target proteins: it mainly mediates the formation of 'Lys-11'-linked polyubiquitin chains and, to a lower extent, the formation of 'Lys-48'- and 'Lys-63'-linked polyubiquitin chains. The APC/C complex catalyzes assembly of branched 'Lys-11'-/'Lys-48'-linked branched ubiquitin chains on target proteins. This is Anaphase-promoting complex subunit 5 (Anapc5) from Mus musculus (Mouse).